The chain runs to 102 residues: Putative septation protein SpoVG (102 aa).

The disordered stretch occupies residues 83–102 (TDEVIPDKNATSDNEESDEA).

This sequence belongs to the SpoVG family.

Functionally, could be involved in septation. The polypeptide is Putative septation protein SpoVG (Staphylococcus epidermidis (strain ATCC 35984 / DSM 28319 / BCRC 17069 / CCUG 31568 / BM 3577 / RP62A)).